We begin with the raw amino-acid sequence, 324 residues long: MLEQGLLVTAGVAFLISVALSPLFIPFLRKLKFGQSIRDEGPKSHQKKSGTPTMGGIVIYVSMMVTTLIMAIKFEHLGAEVSLLLLVTFGYGLIGFLDDYIKVVKKRNLGLTSKQKLLGQLIIAIAFFAIAKGQGFDTHLMIPGTDITFDLYWAYFILVLFMLIGGSNAVNLTDGLDGLLSGTAAIAFGAFSIIAVAQEQYAVAIFCMAVVGAVLGFLVFNANPAKVFMGDTGSLALGGAIAAVAILLKQELLLVIIGGVFVMETLSVIIQVISFKTTGKRVFKMSPLHHHYELCGWSEWRVVVTFWSVGFLLAVLGIYIGVWM.

10 helical membrane passes run 5–25, 52–72, 77–97, 117–137, 147–167, 176–196, 202–222, 227–247, 253–273, and 302–322; these read GLLV…PLFI, PTMG…IMAI, LGAE…IGFL, LLGQ…QGFD, ITFD…IGGS, LDGL…IIAV, AVAI…VFNA, VFMG…VAIL, LLVI…IQVI, and VVVT…YIGV.

It belongs to the glycosyltransferase 4 family. MraY subfamily. Requires Mg(2+) as cofactor.

It localises to the cell membrane. It carries out the reaction UDP-N-acetyl-alpha-D-muramoyl-L-alanyl-gamma-D-glutamyl-meso-2,6-diaminopimeloyl-D-alanyl-D-alanine + di-trans,octa-cis-undecaprenyl phosphate = di-trans,octa-cis-undecaprenyl diphospho-N-acetyl-alpha-D-muramoyl-L-alanyl-D-glutamyl-meso-2,6-diaminopimeloyl-D-alanyl-D-alanine + UMP. Its pathway is cell wall biogenesis; peptidoglycan biosynthesis. Its function is as follows. Catalyzes the initial step of the lipid cycle reactions in the biosynthesis of the cell wall peptidoglycan: transfers peptidoglycan precursor phospho-MurNAc-pentapeptide from UDP-MurNAc-pentapeptide onto the lipid carrier undecaprenyl phosphate, yielding undecaprenyl-pyrophosphoryl-MurNAc-pentapeptide, known as lipid I. The polypeptide is Phospho-N-acetylmuramoyl-pentapeptide-transferase (Bacillus cytotoxicus (strain DSM 22905 / CIP 110041 / 391-98 / NVH 391-98)).